Reading from the N-terminus, the 463-residue chain is MSLIVTRFAPSPTGYLHIGGLRTAIFNYLFARANQGKFFLRIEDTDLSRNSIEAANAIIEAFKWVGLEYDGEILYQSKRFEIYKEYIQKLLDEDKAYYCYMSKDELDALREEQKARKETPRYDNRYRDFKGTPPKGIEPVVRIKVPQNEVIVFNDGVKGEVKVNTNELDDFIIARSDGTPTYNFVVIVDDALMGITDVIRGDDHLSNTPKQIVLYKALNFKIPNFFHVPMILNEEGQKLSKRHGATNVMDYQERGYLKEALVNFLARLGWSYQDKEIFSMQELLECFDPKDLNSSPSCFSWHKLNWLNAHYLKNQSAQELLELLKPFSFSDLSHLNPAQLDRLLDALKERSQTLKELALKIDEVLTAPIEYEKKVFKKLNQALVMPLLEKFKLELNKVNFNDENALENAMHKIIEEEKIKAGSFMQPLRLALLGKGGGIGLKEALFILGKTESLKRIEKFLKN.

Residues Pro-10–Gly-20 carry the 'HIGH' region motif. Positions Lys-238–Arg-242 match the 'KMSKS' region motif. Lys-241 is an ATP binding site.

The protein belongs to the class-I aminoacyl-tRNA synthetase family. Glutamate--tRNA ligase type 1 subfamily. As to quaternary structure, monomer.

The protein localises to the cytoplasm. It catalyses the reaction tRNA(Glu) + L-glutamate + ATP = L-glutamyl-tRNA(Glu) + AMP + diphosphate. Catalyzes the attachment of glutamate to tRNA(Glu) in a two-step reaction: glutamate is first activated by ATP to form Glu-AMP and then transferred to the acceptor end of tRNA(Glu). The sequence is that of Glutamate--tRNA ligase 1 from Helicobacter pylori (strain HPAG1).